Here is a 390-residue protein sequence, read N- to C-terminus: GTPase Obg (390 aa).

Residues 1 to 159 (MKFVDEASIL…RELLLELMLL (159 aa)) form the Obg domain. A disordered region spans residues 127 to 147 (NTRFKSSVNRTPRQKTNGTPG). The segment covering 129–145 (RFKSSVNRTPRQKTNGT) has biased composition (polar residues). In terms of domain architecture, OBG-type G spans 160–333 (ADVGMLGMPN…LCWDVMTFII (174 aa)). Residues 166-173 (GMPNAGKS), 191-195 (FTTLV), 213-216 (DIPG), 283-286 (NKID), and 314-316 (SAA) each bind GTP. The Mg(2+) site is built by Ser173 and Thr193.

Belongs to the TRAFAC class OBG-HflX-like GTPase superfamily. OBG GTPase family. As to quaternary structure, monomer. The cofactor is Mg(2+).

It localises to the cytoplasm. An essential GTPase which binds GTP, GDP and possibly (p)ppGpp with moderate affinity, with high nucleotide exchange rates and a fairly low GTP hydrolysis rate. Plays a role in control of the cell cycle, stress response, ribosome biogenesis and in those bacteria that undergo differentiation, in morphogenesis control. The protein is GTPase Obg of Escherichia coli O7:K1 (strain IAI39 / ExPEC).